The following is a 144-amino-acid chain: Large ribosomal subunit protein uL11 (144 aa).

The protein belongs to the universal ribosomal protein uL11 family. Part of the ribosomal stalk of the 50S ribosomal subunit. Interacts with L10 and the large rRNA to form the base of the stalk. L10 forms an elongated spine to which L12 dimers bind in a sequential fashion forming a multimeric L10(L12)X complex. In terms of processing, one or more lysine residues are methylated.

Its function is as follows. Forms part of the ribosomal stalk which helps the ribosome interact with GTP-bound translation factors. The sequence is that of Large ribosomal subunit protein uL11 from Rhodococcus erythropolis (strain PR4 / NBRC 100887).